The primary structure comprises 1757 residues: E3 ubiquitin-protein ligase UBR1 (1757 aa).

The disordered stretch occupies residues 1 to 24; that stretch reads MADEEMDGAERMDVSPEPPLAPQR. An N-acetylalanine modification is found at Ala2. The segment at 97-168 adopts a UBR-type zinc-finger fold; sequence QLCGKVFKSG…TGPFCVDHEP (72 aa). 7 residues coordinate Zn(2+): Cys99, Cys112, Cys115, Cys124, Cys127, His133, and His136. Residue Phe148 coordinates a peptide. Residue Cys149 participates in Zn(2+) binding. Asp150 is an a peptide binding site. Cys151 contacts Zn(2+). Asp153 contacts a peptide. Cys163 and His166 together coordinate Zn(2+). A disordered region spans residues 842–868; it reads QHSKAEHMQKKRRKQENKDEALPPPPP. The interval 1022 to 1057 is UBC2-binding region (U2BR); it reads RKRKAEAARLHRQKIMAQMSALQKNFIETHKLMYDN. Zn(2+)-binding residues include Cys1101, Cys1104, Cys1162, His1164, His1167, and Cys1170. The segment at 1101-1204 adopts an RING-type; atypical zinc-finger fold; it reads CILCQEEQEV…SGEYLCPLCK (104 aa). At Ser1182 the chain carries Phosphoserine. Zn(2+)-binding residues include Cys1200, Cys1203, Cys1635, Cys1638, and Cys1661.

It belongs to the E3 ubiquitin-protein ligase UBR1-like family. As to quaternary structure, interacts with RECQL4. In terms of tissue distribution, present in skeletal muscle and liver (at protein level). Broadly expressed, with highest levels in skeletal muscle and heart. Expressed in acinar cells of the pancreas. In testes, expressed primarily in spermatogonia.

The protein localises to the cytoplasm. It localises to the cytosol. The enzyme catalyses S-ubiquitinyl-[E2 ubiquitin-conjugating enzyme]-L-cysteine + [acceptor protein]-L-lysine = [E2 ubiquitin-conjugating enzyme]-L-cysteine + N(6)-ubiquitinyl-[acceptor protein]-L-lysine.. The protein operates within protein modification; protein ubiquitination. In terms of biological role, E3 ubiquitin-protein ligase which is a component of the N-end rule pathway. Recognizes and binds proteins bearing specific N-terminal residues (N-degrons) that are destabilizing according to the N-end rule, leading to their ubiquitination and subsequent degradation. Recognizes both type-1 and type-2 N-degrons, containing positively charged amino acids (Arg, Lys and His) and bulky and hydrophobic amino acids, respectively. Does not ubiquitinate proteins that are acetylated at the N-terminus. In contrast, it strongly binds methylated N-degrons. Binds leucine and is a negative regulator of the leucine-mTOR signaling pathway, thereby controlling cell growth. The protein is E3 ubiquitin-protein ligase UBR1 of Mus musculus (Mouse).